The chain runs to 464 residues: Formin-like protein 19 (464 aa).

Residues 1–74 (MSLVDISGAY…PRPCSRPPKT (74 aa)) form a disordered region. Residues 14-70 (PLPPPPPPLMRRRAPLPPPPPPPLMRRRAPPPPPPPLMRRRAPPPPPPPPLPRPCSR) are compositionally biased toward pro residues. The 395-residue stretch at 68–462 (CSRPPKTKCS…KAAKEAEMEK (395 aa)) folds into the FH2 domain.

This sequence belongs to the formin-like family. Class-II subfamily.

The polypeptide is Formin-like protein 19 (FH19) (Arabidopsis thaliana (Mouse-ear cress)).